Here is a 117-residue protein sequence, read N- to C-terminus: Large ribosomal subunit protein bL19 (117 aa).

This sequence belongs to the bacterial ribosomal protein bL19 family.

In terms of biological role, this protein is located at the 30S-50S ribosomal subunit interface and may play a role in the structure and function of the aminoacyl-tRNA binding site. The polypeptide is Large ribosomal subunit protein bL19 (Azobacteroides pseudotrichonymphae genomovar. CFP2).